The sequence spans 290 residues: Ribonuclease 3 (290 aa).

Residues Y20–G145 enclose the RNase III domain. E62 contributes to the Mg(2+) binding site. Residue D66 is part of the active site. 2 residues coordinate Mg(2+): N131 and E134. Residue E134 is part of the active site. The 70-residue stretch at N173–G242 folds into the DRBM domain. The disordered stretch occupies residues K254–V290. Residues E267 to I279 are compositionally biased toward polar residues.

This sequence belongs to the ribonuclease III family. In terms of assembly, homodimer. Mg(2+) serves as cofactor.

It localises to the cytoplasm. The catalysed reaction is Endonucleolytic cleavage to 5'-phosphomonoester.. Its function is as follows. Digests double-stranded RNA. Involved in the processing of primary rRNA transcript to yield the immediate precursors to the large and small rRNAs (23S and 16S). Processes some mRNAs, and tRNAs when they are encoded in the rRNA operon. Processes pre-crRNA and tracrRNA of type II CRISPR loci if present in the organism. This Bacteroides fragilis (strain YCH46) protein is Ribonuclease 3.